The primary structure comprises 241 residues: Thymidylate kinase (241 aa).

Position 17–24 (17–24 (GGEGAGKT)) interacts with ATP.

The protein belongs to the thymidylate kinase family.

It carries out the reaction dTMP + ATP = dTDP + ADP. Its function is as follows. Phosphorylation of dTMP to form dTDP in both de novo and salvage pathways of dTTP synthesis. This Thermosynechococcus vestitus (strain NIES-2133 / IAM M-273 / BP-1) protein is Thymidylate kinase.